We begin with the raw amino-acid sequence, 416 residues long: CinA-like protein (416 aa).

It belongs to the CinA family.

This chain is CinA-like protein, found in Solibacter usitatus (strain Ellin6076).